Reading from the N-terminus, the 375-residue chain is Hemolysin BL-binding component (375 aa).

A signal peptide spans 1 to 31; sequence MIKKIPYKLLAVSTLLTITTANVVSPVATFA. The chain crosses the membrane as a helical span at residues 232–252; sequence FNVMKGAILGLPIIGGIIVGV.

Composed of a binding component, B, and two lytic components, L1 and L2. All three subunits act synergically to cause hemolysis.

Its subcellular location is the secreted. It is found in the host cell membrane. In terms of biological role, cytotoxic protein, part of the enterotoxin complex. Responsible for binding to erythrocytes. This enterotoxin is thought to be the cause of the diarrheal form of gastroenteritis caused by food-borne strains of B.cereus. This Bacillus cereus protein is Hemolysin BL-binding component (hblA).